A 235-amino-acid chain; its full sequence is Transcription factor hepR (235 aa).

The disordered stretch occupies residues 14 to 45 (QNSPESSRDVLSMASPGLLPIDPSPEHDETNK). The C2H2-type zinc-finger motif lies at 175–205 (IQCPCLDERGERCSRMFSRLDNMRDHVRRIH).

It is found in the nucleus. In terms of biological role, transcription factor; part of the gene cluster that mediates the biosynthesis of heptelidic acid (HA), a sesquiterpene lactone that acts as an inhibitor of glyceraldehyde-3-phosphatedehydrogenase (GAPDH) and a growth inhibitor of the salt-tolerant lactic acid bacteria in soy sauce brewing. Both hepR and hepS regulate the transcription of the heptelidic acid cluster, but they are not involved in mutual transcriptional regulation and act with different mechanisms. This is Transcription factor hepR from Aspergillus oryzae (strain ATCC 42149 / RIB 40) (Yellow koji mold).